The following is a 171-amino-acid chain: Putative phosphoesterase BH1439 (171 aa).

The active-site Proton donor is the histidine 34. Short sequence motifs (HXTX) lie at residues 34–37 (HVTL) and 115–118 (HLTI). Histidine 115 functions as the Proton acceptor in the catalytic mechanism.

It belongs to the 2H phosphoesterase superfamily. YjcG family.

The protein is Putative phosphoesterase BH1439 of Halalkalibacterium halodurans (strain ATCC BAA-125 / DSM 18197 / FERM 7344 / JCM 9153 / C-125) (Bacillus halodurans).